The primary structure comprises 248 residues: Proteasome subunit alpha type-7 (248 aa).

Ser-130 carries an O-linked (GlcNAc) serine glycan. Residue Tyr-153 is modified to Phosphotyrosine. N6-acetyllysine is present on Lys-227.

It belongs to the peptidase T1A family. In terms of assembly, the 26S proteasome consists of a 20S proteasome core and two 19S regulatory subunits. The 20S proteasome core is a barrel-shaped complex made of 28 subunits that are arranged in four stacked rings. The two outer rings are each formed by seven alpha subunits, and the two inner rings are formed by seven beta subunits. The proteolytic activity is exerted by three beta-subunits PSMB5, PSMB6 and PSMB7. PSMA7 interacts directly with the PSMG1-PSMG2 heterodimer which promotes 20S proteasome assembly. Interacts with HIF1A. Interacts with RAB7A. Interacts with PRKN. Interacts with ABL1 and ABL2. Interacts with EMAP2. Interacts with MAVS.

The protein localises to the cytoplasm. The protein resides in the nucleus. Component of the 20S core proteasome complex involved in the proteolytic degradation of most intracellular proteins. This complex plays numerous essential roles within the cell by associating with different regulatory particles. Associated with two 19S regulatory particles, forms the 26S proteasome and thus participates in the ATP-dependent degradation of ubiquitinated proteins. The 26S proteasome plays a key role in the maintenance of protein homeostasis by removing misfolded or damaged proteins that could impair cellular functions, and by removing proteins whose functions are no longer required. Associated with the PA200 or PA28, the 20S proteasome mediates ubiquitin-independent protein degradation. This type of proteolysis is required in several pathways including spermatogenesis (20S-PA200 complex) or generation of a subset of MHC class I-presented antigenic peptides (20S-PA28 complex). Inhibits the transactivation function of HIF-1A under both normoxic and hypoxia-mimicking conditions. The interaction with EMAP2 increases the proteasome-mediated HIF-1A degradation under the hypoxic conditions. Plays a role in hepatitis C virus internal ribosome entry site-mediated translation. Mediates nuclear translocation of the androgen receptor (AR) and thereby enhances androgen-mediated transactivation. Promotes MAVS degradation and thereby negatively regulates MAVS-mediated innate immune response. This is Proteasome subunit alpha type-7 (PSMA7) from Bos taurus (Bovine).